Reading from the N-terminus, the 90-residue chain is UPF0235 protein CPn_0497/CP_0257/CPj0497/CpB0517 (90 aa).

This sequence belongs to the UPF0235 family.

The chain is UPF0235 protein CPn_0497/CP_0257/CPj0497/CpB0517 from Chlamydia pneumoniae (Chlamydophila pneumoniae).